The sequence spans 397 residues: Tryptophan synthase beta chain (397 aa).

K86 is subject to N6-(pyridoxal phosphate)lysine.

It belongs to the TrpB family. In terms of assembly, tetramer of two alpha and two beta chains. Pyridoxal 5'-phosphate is required as a cofactor.

It carries out the reaction (1S,2R)-1-C-(indol-3-yl)glycerol 3-phosphate + L-serine = D-glyceraldehyde 3-phosphate + L-tryptophan + H2O. The protein operates within amino-acid biosynthesis; L-tryptophan biosynthesis; L-tryptophan from chorismate: step 5/5. Functionally, the beta subunit is responsible for the synthesis of L-tryptophan from indole and L-serine. The sequence is that of Tryptophan synthase beta chain from Aeromonas salmonicida (strain A449).